The following is a 1204-amino-acid chain: DNA-directed RNA polymerase subunit beta' (1204 aa).

Residues Cys-60, Cys-62, Cys-75, and Cys-78 each contribute to the Zn(2+) site. Mg(2+) contacts are provided by Asp-449, Asp-451, and Asp-453. Residues Cys-819, Cys-893, Cys-900, and Cys-903 each contribute to the Zn(2+) site.

Belongs to the RNA polymerase beta' chain family. In terms of assembly, the RNAP catalytic core consists of 2 alpha, 1 beta, 1 beta' and 1 omega subunit. When a sigma factor is associated with the core the holoenzyme is formed, which can initiate transcription. Mg(2+) serves as cofactor. Requires Zn(2+) as cofactor.

The catalysed reaction is RNA(n) + a ribonucleoside 5'-triphosphate = RNA(n+1) + diphosphate. Its function is as follows. DNA-dependent RNA polymerase catalyzes the transcription of DNA into RNA using the four ribonucleoside triphosphates as substrates. This Bacillus cytotoxicus (strain DSM 22905 / CIP 110041 / 391-98 / NVH 391-98) protein is DNA-directed RNA polymerase subunit beta'.